Consider the following 127-residue polypeptide: MRHILERIFFTSFAKKGWLKMLCAFEGLVDEKTKERLRKRNYHGNTCLHIATEEHRGRQAIWLIEKLVEYGADLDEKKHCDGDTVLHMAVKKGDYKLATWMCQQLSMRFGSRKLSQPHGVSSSIEKR.

2 ANK repeats span residues 43 to 76 (HGNT…DLDE) and 81 to 111 (DGDT…RFGS).

This sequence belongs to the polydnaviridae I-Kappa-B-like protein family.

In terms of biological role, suppresses the host immune response through NF-kappa-B inactivation. Possesses ankyrin repeat domains required for NF-kappa-B binding but lacks the regulatory regions required for dissociation from NF-kappa-B and degradation. Therefore, prevents host NF-kappa-B release and subsequent activation. The chain is I-Kappa-B like protein J1 (J2) from Microplitis demolitor (Parasitoid wasp).